Reading from the N-terminus, the 470-residue chain is 6-phospho-beta-galactosidase (470 aa).

Positions 19, 116, 159, 160, and 297 each coordinate D-galactose 6-phosphate. Glu-160 acts as the Proton donor in catalysis. The active-site Nucleophile is Glu-375. Positions 430, 431, 437, and 439 each coordinate D-galactose 6-phosphate.

This sequence belongs to the glycosyl hydrolase 1 family.

It carries out the reaction a 6-phospho-beta-D-galactoside + H2O = D-galactose 6-phosphate + an alcohol. It functions in the pathway carbohydrate metabolism; lactose degradation; D-galactose 6-phosphate and beta-D-glucose from lactose 6-phosphate: step 1/1. This is 6-phospho-beta-galactosidase from Staphylococcus aureus (strain USA300).